A 309-amino-acid polypeptide reads, in one-letter code: Elongation factor Ts (309 aa).

The interval 82 to 85 (TDFV) is involved in Mg(2+) ion dislocation from EF-Tu.

It belongs to the EF-Ts family.

It localises to the cytoplasm. Functionally, associates with the EF-Tu.GDP complex and induces the exchange of GDP to GTP. It remains bound to the aminoacyl-tRNA.EF-Tu.GTP complex up to the GTP hydrolysis stage on the ribosome. The protein is Elongation factor Ts of Rickettsia akari (strain Hartford).